We begin with the raw amino-acid sequence, 109 residues long: Aquaporin-2 (109 aa).

At 1–6 (SIAFSR) the chain is on the cytoplasmic side. The helical transmembrane segment at 7 to 27 (AVFAEFLATLLFVFFGLGSAL) threads the bilayer. Topologically, residues 28–35 (NWPSALPS) are extracellular. The helical transmembrane segment at 36-54 (TLQIAMAFGLGIGTLVQAL) threads the bilayer. The Cytoplasmic segment spans residues 55–59 (GHVSG). The segment at residues 60–69 (AHINPAVTVA) is an intramembrane region (discontinuously helical). The NPA 1 motif lies at 63–65 (NPA). The Cytoplasmic segment spans residues 70–80 (CLVGCHVSFLR). A helical transmembrane segment spans residues 81 to 102 (AAFYVAAQLLGAVAGAALLHEI). Topologically, residues 103 to 109 (TPAEVRG) are extracellular.

The protein belongs to the MIP/aquaporin (TC 1.A.8) family. Homotetramer. Serine phosphorylation is necessary and sufficient for expression at the apical membrane. Endocytosis is not phosphorylation-dependent. Post-translationally, N-glycosylated.

It is found in the apical cell membrane. The protein localises to the basolateral cell membrane. Its subcellular location is the cell membrane. It localises to the cytoplasmic vesicle membrane. The protein resides in the golgi apparatus. It is found in the trans-Golgi network membrane. It catalyses the reaction H2O(in) = H2O(out). The enzyme catalyses glycerol(in) = glycerol(out). Its function is as follows. Forms a water-specific channel that provides the plasma membranes of renal collecting duct with high permeability to water, thereby permitting water to move in the direction of an osmotic gradient. Plays an essential role in renal water homeostasis. Could also be permeable to glycerol. The polypeptide is Aquaporin-2 (Oryctolagus cuniculus (Rabbit)).